The primary structure comprises 425 residues: Xyloglucan O-acetyltransferase 2 (425 aa).

Topologically, residues 1 to 18 are cytoplasmic; that stretch reads MGSPFKDHHTLHPSLVRK. Residues 19–38 form a helical; Signal-anchor for type II membrane protein membrane-spanning segment; the sequence is LIPWTFYAMVPLVLFRVYLY. The Lumenal segment spans residues 39-425; the sequence is PYPLHHTTTT…KWEYASRREQ (387 aa). 4 disulfides stabilise this stretch: C68-C118, C89-C154, C98-C398, and C313-C394. N85 carries N-linked (GlcNAc...) asparagine glycosylation. A GDS motif motif is present at residues 141–143; that stretch reads GDS. S143 serves as the catalytic Nucleophile. Residues N183 and N259 are each glycosylated (N-linked (GlcNAc...) asparagine). Residue D393 is the Proton donor of the active site. Positions 393–396 match the DXXH motif motif; the sequence is DCVH. H396 (proton acceptor) is an active-site residue.

Belongs to the PC-esterase family. TBL subfamily.

It is found in the golgi apparatus membrane. Its function is as follows. Xyloglucan acetyltransferase that catalyzes the acetylation of fucosylated Gal residues on xyloglucan side chains. Predominantly catalyze 6-O-monoacetylation of Gal residues in the Fuc-Gal-Xyl trisaccharide side chains of xyloglucan oligomers. This chain is Xyloglucan O-acetyltransferase 2, found in Populus trichocarpa (Western balsam poplar).